A 516-amino-acid chain; its full sequence is uncharacterized protein (516 aa).

Positions 1 to 22 (MLYRFWKTGLAIFMPGCILLSS) are cleaved as a signal peptide. Residue C23 is the site of N-palmitoyl cysteine attachment. The S-diacylglycerol cysteine moiety is linked to residue C23.

This sequence belongs to the MG067/MG068/MG395 family.

It is found in the cell membrane. This is an uncharacterized protein from Mycoplasma genitalium (strain ATCC 33530 / DSM 19775 / NCTC 10195 / G37) (Mycoplasmoides genitalium).